We begin with the raw amino-acid sequence, 60 residues long: UPF0434 protein CKO_02153 (60 aa).

Belongs to the UPF0434 family.

The sequence is that of UPF0434 protein CKO_02153 from Citrobacter koseri (strain ATCC BAA-895 / CDC 4225-83 / SGSC4696).